We begin with the raw amino-acid sequence, 29 residues long: Beta-hexatoxin-Mr1a (29 aa).

Intrachain disulfides connect Cys2-Cys16, Cys9-Cys21, and Cys15-Cys26.

The protein belongs to the neurotoxin 15 family. 01 (magi-5) subfamily. Expressed by the venom gland.

It localises to the secreted. In terms of biological role, insect and vertebrate active toxin. Binds at site 4 of mammalian voltage-gated sodium channels and shifts the activation voltage of the mammalian rNav1.2a (SCN2A) channel to more hyperpolarized voltages, whereas the insect channel, DmNav1 (para), is not affected. Causes temporary paralysis when injected into lepidopteran larvae at 8.6 nmol/g. A low intracranial injection dose into mice causes lacrimation, closure of the eyes and sweating. A high injection dose causes extensive lacrimation and death. This is Beta-hexatoxin-Mr1a from Macrothele raveni (Funnel-web spider).